We begin with the raw amino-acid sequence, 185 residues long: Anaphase-promoting complex subunit 10 (185 aa).

Thr-2 carries the N-acetylthreonine modification. The 184-residue stretch at 2-185 (TTPNKTPPGA…IDFMMYRSIR (184 aa)) folds into the DOC domain. An N6-acetyllysine modification is found at Lys-169.

This sequence belongs to the APC10 family. In terms of assembly, the mammalian APC/C is composed at least of 14 distinct subunits ANAPC1, ANAPC2, CDC27/APC3, ANAPC4, ANAPC5, CDC16/APC6, ANAPC7, CDC23/APC8, ANAPC10, ANAPC11, CDC26/APC12, ANAPC13, ANAPC15 and ANAPC16 that assemble into a complex of at least 19 chains with a combined molecular mass of around 1.2 MDa; APC/C interacts with FZR1 and FBXO5. The C-terminus of APC10 binds to CDC27/APC3. Interacts with PIWIL1; interaction only takes place when PIWIL1 binds piRNA. Interacts with FBXO43; the interaction is direct.

It participates in protein modification; protein ubiquitination. Functionally, component of the anaphase promoting complex/cyclosome (APC/C), a cell cycle-regulated E3 ubiquitin ligase that controls progression through mitosis and the G1 phase of the cell cycle. The APC/C complex acts by mediating ubiquitination and subsequent degradation of target proteins: it mainly mediates the formation of 'Lys-11'-linked polyubiquitin chains and, to a lower extent, the formation of 'Lys-48'- and 'Lys-63'-linked polyubiquitin chains. The APC/C complex catalyzes assembly of branched 'Lys-11'-/'Lys-48'-linked branched ubiquitin chains on target proteins. The sequence is that of Anaphase-promoting complex subunit 10 (Anapc10) from Mus musculus (Mouse).